The sequence spans 122 residues: Large ribosomal subunit protein bL12 (122 aa).

It belongs to the bacterial ribosomal protein bL12 family. In terms of assembly, homodimer. Part of the ribosomal stalk of the 50S ribosomal subunit. Forms a multimeric L10(L12)X complex, where L10 forms an elongated spine to which 2 to 4 L12 dimers bind in a sequential fashion. Binds GTP-bound translation factors.

In terms of biological role, forms part of the ribosomal stalk which helps the ribosome interact with GTP-bound translation factors. Is thus essential for accurate translation. The sequence is that of Large ribosomal subunit protein bL12 from Glaesserella parasuis serovar 5 (strain SH0165) (Haemophilus parasuis).